Consider the following 70-residue polypeptide: Melittin (70 aa).

A signal peptide spans 1–21 (MKFLVNVALVFMVVYISYIYA). A propeptide spans 22-43 (APEPEPAPEPEAEADAEADPEA) (removed by a dipeptidylpeptidase). N-formylglycine; partial is present on Gly44. At Gln69 the chain carries Glutamine amide.

Belongs to the melittin family. Monomer (in solution and for integration into membranes), homotetramer (in solution and potentially as a toroidal pore in membranes), and potenially homomultimer (as a toroidal pore in membranes). As to expression, expressed by the venom gland.

The protein resides in the secreted. Its subcellular location is the target cell membrane. Functionally, melittin: Main toxin of bee venom with strong antimicrobial activity and hemolytic activity. It has enhancing effects on bee venom phospholipase A2 activity. This amphipathic toxin binds to negatively charged membrane surface and forms pore by inserting into lipid bilayers inducing the leakage of ions and molecules and the enhancement of permeability that ultimately leads to cell lysis. It acts as a voltage-gated pore with higher selectivity for anions over cations. The ion conductance has been shown to be voltage-dependent. Self-association of melittin in membranes is promoted by high ionic strength, but not by the presence of negatively charged lipids. In vivo, intradermal injection into healthy human volunteers produce sharp pain sensation and an inflammatory response. It produces pain by activating primary nociceptor cells directly and indirectly due to its ability to activate plasma membrane phospholipase A2 and its pore-forming activity. In the context of inflammation and cancer tests, is highly cytotoxic to normal cells, highly induces calcium signaling and almost completely prevents cAMP production. In addition, prevents LPS-induced nitric oxid (NO) synthesis but does not affect the IP3 signaling and pro-inflammatory activation of endothelial cells. Also shows significant antiproliferative activity on the breast cancer cell line MDA-MB-231. Melittin-S: 1.4-fold less hemolytic and adopts a less organized secondary structure than melittin. Its function is as follows. Melittin-2: Has strong hemolytic activity. This is Melittin (MELT) from Apis mellifera (Honeybee).